A 377-amino-acid chain; its full sequence is 26S proteasome non-ATPase regulatory subunit 4 (377 aa).

The region spanning 5 to 188 is the VWFA domain; it reads STMVCVDNSE…LADALISSPI (184 aa). A Glycyl lysine isopeptide (Lys-Gly) (interchain with G-Cter in SUMO2) cross-link involves residue Lys-122. The segment at 197 to 262 is interaction with UBQLN1; that stretch reads LGLGASDFEF…TEDSDDALLK (66 aa). Residues 211-230 enclose the UIM 1 domain; it reads SADPELALALRVSMEEQRQR. An essential for ubiquitin-binding region spans residues 216–220; it reads LALAL. Over residues 224-237 the composition is skewed to basic and acidic residues; the sequence is MEEQRQRQEEEARR. The interval 224 to 255 is disordered; sequence MEEQRQRQEEEARRAAAASAAEAGIATTGTED. Thr-250 and Thr-253 each carry phosphothreonine. Phosphoserine occurs at positions 256 and 266. One can recognise a UIM 2 domain in the interval 282-301; that stretch reads TEEEQIAYAMQMSLQGAEFG. The tract at residues 287-291 is essential for ubiquitin-binding; that stretch reads IAYAM. Disordered regions lie at residues 300 to 327 and 341 to 377; these read FGQA…DDYD and NLPG…EDKK. Residues Ser-358 and Ser-361 each carry the phosphoserine modification. Positions 365–377 are enriched in basic and acidic residues; sequence KDGKKDKKEEDKK.

This sequence belongs to the proteasome subunit S5A family. As to quaternary structure, component of the 19S proteasome regulatory particle complex. The 26S proteasome consists of a 20S core particle (CP) and two 19S regulatory subunits (RP). The regulatory particle is made of a lid composed of 9 subunits, a base containing 6 ATPases and few additional components including PSMD4. Interacts with NUB1. Interacts with SQSTM1. Interacts with UBQLN4. Interacts with UBE3A. Interacts with UBQLN1 (via ubiquitin-like domain). Interacts with DDI2.

Functionally, component of the 26S proteasome, a multiprotein complex involved in the ATP-dependent degradation of ubiquitinated proteins. This complex plays a key role in the maintenance of protein homeostasis by removing misfolded or damaged proteins, which could impair cellular functions, and by removing proteins whose functions are no longer required. Therefore, the proteasome participates in numerous cellular processes, including cell cycle progression, apoptosis, or DNA damage repair. PSMD4 acts as an ubiquitin receptor subunit through ubiquitin-interacting motifs and selects ubiquitin-conjugates for destruction. Displays a preferred selectivity for longer polyubiquitin chains. This Homo sapiens (Human) protein is 26S proteasome non-ATPase regulatory subunit 4 (PSMD4).